The sequence spans 354 residues: Guanine nucleotide-binding protein G(i) subunit alpha-3 (354 aa).

The N-myristoyl glycine moiety is linked to residue Gly2. Cys3 carries the S-palmitoyl cysteine lipid modification. Residues 32–354 (KEVKLLLLGA…KNNLKECGLY (323 aa)) form the G-alpha domain. The interval 35 to 48 (KLLLLGAGESGKST) is G1 motif. Residues Gly42, Glu43, Ser44, Gly45, Lys46, Ser47, Thr48, Asp150, Ser151, Leu175, Arg176, Thr177, Arg178, Val179, Lys180, Thr181, Val201, Gly203, Asn269, Lys270, Asp272, Leu273, Cys325, Ala326, and Thr327 each coordinate GTP. Position 47 (Ser47) interacts with Mg(2+). The segment at 173–181 (DVLRTRVKT) is G2 motif. Mg(2+) is bound at residue Thr181. A G3 motif region spans residues 196–205 (FKMFDVGGQR). A G4 motif region spans residues 265 to 272 (ILFLNKKD). The G5 motif stretch occupies residues 324-329 (TCATDT).

This sequence belongs to the G-alpha family. G(i/o/t/z) subfamily. In terms of assembly, heterotrimeric G proteins are composed of 3 units; alpha, beta and gamma. The alpha subunit contains the guanine nucleotide binding site. GTP binding causes dissociation of the heterotrimer, liberating the individual subunits so that they can interact with downstream effector proteins. Forms a complex with CCDC88A/GIV and EGFR which leads to enhanced EGFR signaling and triggering of cell migration; ligand stimulation is required for recruitment of GNAI3 to the complex. Interacts (inactive GDP-bound form) with CCDC88A/GIV (via GBA motif); the interaction leads to activation of GNAI3. Interacts (inactive GDP-bound form) with CCDC88C/DAPLE (via GBA motif); the interaction leads to activation of GNAI3. Interacts (inactive GDP-bound form) with NUCB1 (via GBA motif) and NUCB2 (via GBA motif); the interaction leads to activation of GNAI3. Interacts (inactive GDP-bound form) with PLCD4 (via GBA motif); the interaction leads to activation of GNAI3. Interacts with INSR; the interaction is probably mediated by CCDC88A/GIV. Interacts with GPSM1. Interacts (GDP-bound form) with GPSM2 (via GoLoco domains). Does not interact with RGS2. Interacts with RGS8 and RGS10; this strongly enhances the intrinsic GTPase activity. Interacts with RGS16; this strongly enhances the intrinsic GTPase activity. Interacts with RGS12. Interacts (via active GTP- or inactive GDP-bound form) with RGS14. Interacts (via active GTP-bound form) with TRPC5 (via ANK repeats) in a homotetrameric ion channel; the interaction is direct and activates the channel activity. Ubiquitously expressed.

The protein localises to the cytoplasm. The protein resides in the cell membrane. Its subcellular location is the cytoskeleton. It localises to the microtubule organizing center. It is found in the centrosome. Functionally, heterotrimeric guanine nucleotide-binding proteins (G proteins) function as transducers downstream of G protein-coupled receptors (GPCRs) in numerous signaling cascades. The alpha chain contains the guanine nucleotide binding site and alternates between an active, GTP-bound state and an inactive, GDP-bound state. Signaling by an activated GPCR promotes GDP release and GTP binding. The alpha subunit has a low GTPase activity that converts bound GTP to GDP, thereby terminating the signal. Both GDP release and GTP hydrolysis are modulated by numerous regulatory proteins. Signaling is mediated via effector proteins, such as adenylate cyclase. Inhibits adenylate cyclase activity, leading to decreased intracellular cAMP levels. Stimulates the activity of receptor-regulated K(+) channels. The active GTP-bound form prevents the association of RGS14 with centrosomes and is required for the translocation of RGS14 from the cytoplasm to the plasma membrane. May play a role in cell division. The active GTP-bound form activates the calcium permeant TRPC5 ion channels. This Cavia porcellus (Guinea pig) protein is Guanine nucleotide-binding protein G(i) subunit alpha-3 (GNAI3).